A 454-amino-acid chain; its full sequence is CCA-adding enzyme (454 aa).

The ATP site is built by S59 and R62. CTP is bound by residues S59 and R62. Mg(2+) contacts are provided by D71, D73, and D125. 3 residues coordinate ATP: H148, K167, and Y176. CTP is bound by residues H148, K167, and Y176.

It belongs to the tRNA nucleotidyltransferase/poly(A) polymerase family. Archaeal CCA-adding enzyme subfamily. As to quaternary structure, homodimer. It depends on Mg(2+) as a cofactor.

The enzyme catalyses a tRNA precursor + 2 CTP + ATP = a tRNA with a 3' CCA end + 3 diphosphate. It catalyses the reaction a tRNA with a 3' CCA end + 2 CTP + ATP = a tRNA with a 3' CCACCA end + 3 diphosphate. Catalyzes the addition and repair of the essential 3'-terminal CCA sequence in tRNAs without using a nucleic acid template. Adds these three nucleotides in the order of C, C, and A to the tRNA nucleotide-73, using CTP and ATP as substrates and producing inorganic pyrophosphate. tRNA 3'-terminal CCA addition is required both for tRNA processing and repair. Also involved in tRNA surveillance by mediating tandem CCA addition to generate a CCACCA at the 3' terminus of unstable tRNAs. While stable tRNAs receive only 3'-terminal CCA, unstable tRNAs are marked with CCACCA and rapidly degraded. The protein is CCA-adding enzyme of Methanosarcina acetivorans (strain ATCC 35395 / DSM 2834 / JCM 12185 / C2A).